Here is a 144-residue protein sequence, read N- to C-terminus: Large ribosomal subunit protein uL15 (144 aa).

Over residues 1-10 (MYLNTISPSR) the composition is skewed to polar residues. Residues 1–51 (MYLNTISPSRGSKHLSKRVGRGIGSGLGKTGGRGHKGQKSRSGGKVRLGFE) form a disordered region. Over residues 11–20 (GSKHLSKRVG) the composition is skewed to basic residues. Residues 21–31 (RGIGSGLGKTG) are compositionally biased toward gly residues. Over residues 32–44 (GRGHKGQKSRSGG) the composition is skewed to basic residues.

This sequence belongs to the universal ribosomal protein uL15 family. In terms of assembly, part of the 50S ribosomal subunit.

Binds to the 23S rRNA. The protein is Large ribosomal subunit protein uL15 of Blochmanniella pennsylvanica (strain BPEN).